Here is a 267-residue protein sequence, read N- to C-terminus: 22 kDa alpha-zein 14 (267 aa).

The N-terminal stretch at 1–21 is a signal peptide; that stretch reads MATKILSLLALLALFASATNA.

The protein belongs to the zein family.

Zeins are major seed storage proteins. The sequence is that of 22 kDa alpha-zein 14 from Zea mays (Maize).